The chain runs to 694 residues: ATP-binding cassette sub-family G member 8 (694 aa).

At 1–437 (MAEKTKEETQ…ISNDFRDLPT (437 aa)) the chain is on the cytoplasmic side. One can recognise an ABC transporter domain in the interval 91-335 (AQFKLPWRSR…FTSIGYPCPR (245 aa)). Residues 436–684 (PTLFIHGAEA…FLSLYYLSLK (249 aa)) enclose the ABC transmembrane type-2 domain. A helical transmembrane segment spans residues 438–458 (LFIHGAEACLMSLIIGFLYYG). Residues 459–468 (HADKPLSFMD) lie on the Extracellular side of the membrane. A helical transmembrane segment spans residues 469 to 489 (MAALLFMIGALIPFNVILDVV). Residues 490-518 (SKCHSERSLLYYELEDGLYTAGPYFFAKV) are Cytoplasmic-facing. The helical transmembrane segment at 519-539 (LGELPEHCAYVIIYGMPIYWL) threads the bilayer. Over 540–548 (TNLRPGPEL) the chain is Extracellular. A helical transmembrane segment spans residues 549-569 (FLLHFMLLWLVVFCCRTMALA). The Cytoplasmic segment spans residues 570 to 576 (ASAMLPT). The helical transmembrane segment at 577 to 597 (FHMSSFCCNALYNSFYLTAGF) threads the bilayer. At 598-660 (MINLNNLWIV…VTAMDLNSHP (63 aa)) the chain is on the extracellular side. Asn-640 carries an N-linked (GlcNAc...) asparagine glycan. A helical membrane pass occupies residues 661–681 (LYAIYLIVIGISCGFLSLYYL). The Cytoplasmic portion of the chain corresponds to 682–694 (SLKFIKQKSIQDW).

The protein belongs to the ABC transporter superfamily. ABCG family. Eye pigment precursor importer (TC 3.A.1.204) subfamily. As to quaternary structure, heterodimer with ABCG8. Mg(2+) serves as cofactor. Post-translationally, N-glycosylated. N-glycosylation is important for efficient export out of the endoplasmic reticulum. In terms of tissue distribution, highest expression in liver, with lower levels in small intestine and colon.

Its subcellular location is the cell membrane. The protein resides in the apical cell membrane. It carries out the reaction cholesterol(in) + ATP + H2O = cholesterol(out) + ADP + phosphate + H(+). The catalysed reaction is sitosterol(in) + ATP + H2O = sitosterol(out) + ADP + phosphate + H(+). Its function is as follows. ABCG5 and ABCG8 form an obligate heterodimer that mediates Mg(2+)- and ATP-dependent sterol transport across the cell membrane. Plays an essential role in the selective transport of the dietary cholesterol in and out of the enterocytes and in the selective sterol excretion by the liver into bile. Required for normal sterol homeostasis. The heterodimer with ABCG5 has ATPase activity. The polypeptide is ATP-binding cassette sub-family G member 8 (Rattus norvegicus (Rat)).